A 746-amino-acid polypeptide reads, in one-letter code: Taurocyamine kinase (746 aa).

Approximate repeat units follow at residues 31–393 and 394–705; these read MQVE…PEGV and MPVE…YGEH. In terms of domain architecture, Phosphagen kinase N-terminal 1 spans 35–116; sequence SLQNLQAKIR…FDAVIADYHK (82 aa). Residues 146 to 382 form the Phosphagen kinase C-terminal 1 domain; the sequence is LVVSTRVRLG…RALLELEVML (237 aa). ATP is bound by residues 149-153, H212, and R256; that span reads STRVR. C298 is an active-site residue. ATP is bound by residues 307-311 and 335-340; these read RASVH and RGTHGE. A Phosphagen kinase N-terminal 2 domain is found at 398–479; sequence PLTYLAKLLE…LDPLICDYHG (82 aa). The Phosphagen kinase C-terminal 2 domain occupies 509-746; it reads FIVSTRVRVG…AKMIEIEKGL (238 aa). ATP contacts are provided by residues 512 to 516, H575, and R619; that span reads STRVR. C661 is an active-site residue. ATP contacts are provided by residues 670–674 and 699–704; these read RASVL and RGLYGE.

The protein belongs to the ATP:guanido phosphotransferase family. Requires Mg(2+) as cofactor.

The enzyme catalyses taurocyamine + ATP = N-phosphotaurocyamine + ADP + H(+). Functionally, this family of enzymes reversibly catalyzes the transfer of phosphate between ATP and various phosphogens (e.g. creatine phosphate). The protein is Taurocyamine kinase of Schistosoma mansoni (Blood fluke).